The chain runs to 492 residues: N-succinylglutamate 5-semialdehyde dehydrogenase (492 aa).

220–225 (GSASTG) is an NAD(+) binding site. Residues Glu-243 and Cys-277 contribute to the active site.

This sequence belongs to the aldehyde dehydrogenase family. AstD subfamily.

The catalysed reaction is N-succinyl-L-glutamate 5-semialdehyde + NAD(+) + H2O = N-succinyl-L-glutamate + NADH + 2 H(+). It participates in amino-acid degradation; L-arginine degradation via AST pathway; L-glutamate and succinate from L-arginine: step 4/5. Its function is as follows. Catalyzes the NAD-dependent reduction of succinylglutamate semialdehyde into succinylglutamate. This is N-succinylglutamate 5-semialdehyde dehydrogenase from Salmonella paratyphi C (strain RKS4594).